The chain runs to 158 residues: Mitotic-spindle organizing protein 2A (158 aa).

Position 34 is a phosphoserine (Ser-34). The disordered stretch occupies residues Arg-84–Thr-158. Low complexity predominate over residues Ser-112–Ala-122. Polar residues predominate over residues Glu-128 to Ala-140. The residue at position 152 (Ser-152) is a Phosphoserine.

The protein belongs to the MOZART2 family. In terms of assembly, associates with the gamma-tubulin ring complex (gTuRC) consisting of TUBGCP2, TUBGCP3, TUBGCP4, TUBGCP5 and TUBGCP6 and gamma-tubulin TUBG1 or TUBG2; within the complex, interacts with TUBGCP2; the interaction plays a role in gTuRC activation.

It localises to the cytoplasm. Its subcellular location is the cytoskeleton. The protein localises to the microtubule organizing center. The protein resides in the centrosome. It is found in the spindle. Its function is as follows. Required for the recruitment and the assembly of the gamma-tubulin ring complex (gTuRC) at the centrosome. The gTuRC regulates the minus-end nucleation of alpha-beta tubulin heterodimers that grow into microtubule protafilaments, a critical step in centrosome duplication and spindle formation. This chain is Mitotic-spindle organizing protein 2A (MZT2A), found in Homo sapiens (Human).